The chain runs to 470 residues: Suppressor of SWI4 1 homolog (470 aa).

Positions 29–292 (PHSFVFTRGR…LIKIQEGVGN (264 aa)) constitute a Brix domain. Phosphoserine is present on residues Ser-238 and Ser-240. Disordered regions lie at residues 240–264 (SEVEPDGEHNTTELPQAVAGRGNMQ) and 323–470 (AQRQ…RRRN). Basic residues predominate over residues 342-355 (AHKKKSLAGIKRAR). A Phosphoserine modification is found at Ser-362. The residue at position 441 (Lys-441) is an N6-acetyllysine. Residues 447 to 457 (QRGKAKPRPRA) are compositionally biased toward basic residues.

It is found in the nucleus. Its subcellular location is the nucleolus. In terms of biological role, may have a role in cell growth. The sequence is that of Suppressor of SWI4 1 homolog (Ppan) from Mus musculus (Mouse).